A 282-amino-acid polypeptide reads, in one-letter code: Bifunctional protein FolD 2 (282 aa).

NADP(+) contacts are provided by residues 165–167 (GRS) and Ser190.

It belongs to the tetrahydrofolate dehydrogenase/cyclohydrolase family. As to quaternary structure, homodimer.

It catalyses the reaction (6R)-5,10-methylene-5,6,7,8-tetrahydrofolate + NADP(+) = (6R)-5,10-methenyltetrahydrofolate + NADPH. The enzyme catalyses (6R)-5,10-methenyltetrahydrofolate + H2O = (6R)-10-formyltetrahydrofolate + H(+). Its pathway is one-carbon metabolism; tetrahydrofolate interconversion. Functionally, catalyzes the oxidation of 5,10-methylenetetrahydrofolate to 5,10-methenyltetrahydrofolate and then the hydrolysis of 5,10-methenyltetrahydrofolate to 10-formyltetrahydrofolate. The protein is Bifunctional protein FolD 2 of Acinetobacter baylyi (strain ATCC 33305 / BD413 / ADP1).